A 118-amino-acid polypeptide reads, in one-letter code: DNA-binding protein SSO0352 (118 aa).

Belongs to the PDCD5 family.

The protein is DNA-binding protein SSO0352 of Saccharolobus solfataricus (strain ATCC 35092 / DSM 1617 / JCM 11322 / P2) (Sulfolobus solfataricus).